A 284-amino-acid polypeptide reads, in one-letter code: 2-dehydro-3-deoxyphosphooctonate aldolase (284 aa).

Belongs to the KdsA family.

The protein resides in the cytoplasm. It carries out the reaction D-arabinose 5-phosphate + phosphoenolpyruvate + H2O = 3-deoxy-alpha-D-manno-2-octulosonate-8-phosphate + phosphate. It participates in carbohydrate biosynthesis; 3-deoxy-D-manno-octulosonate biosynthesis; 3-deoxy-D-manno-octulosonate from D-ribulose 5-phosphate: step 2/3. Its pathway is bacterial outer membrane biogenesis; lipopolysaccharide biosynthesis. The chain is 2-dehydro-3-deoxyphosphooctonate aldolase from Actinobacillus succinogenes (strain ATCC 55618 / DSM 22257 / CCUG 43843 / 130Z).